The following is a 292-amino-acid chain: MEMO1 family protein PF1638 (292 aa).

The protein belongs to the MEMO1 family.

The polypeptide is MEMO1 family protein PF1638 (Pyrococcus furiosus (strain ATCC 43587 / DSM 3638 / JCM 8422 / Vc1)).